A 282-amino-acid chain; its full sequence is Homeobox protein Hox-C12 (282 aa).

Disordered stretches follow at residues 94–129 and 147–214; these read YYREPCAEGGGGGLKREERGRDPGAGPGAALLPLEP and GGDG…NSRS. Low complexity predominate over residues 162 to 175; sequence SCQSLESDSSSSLL. The homeobox DNA-binding region spans 214–273; that stretch reads SRKKRKPYSKLQLAELEGEFLVNEFITRQRRRELSDRLNLSDQQVKIWFQNRRMKKKRLL.

It belongs to the Abd-B homeobox family.

It is found in the nucleus. Its function is as follows. Sequence-specific transcription factor which is part of a developmental regulatory system that provides cells with specific positional identities on the anterior-posterior axis. The sequence is that of Homeobox protein Hox-C12 (HOXC12) from Homo sapiens (Human).